A 712-amino-acid polypeptide reads, in one-letter code: Polyribonucleotide nucleotidyltransferase (712 aa).

Mg(2+) is bound by residues Asp-487 and Asp-493. The region spanning 554 to 613 (PRIEVMNIPVDKIREVIGSGGKVIREIVEKTGAKINIEDDGTVKIASSSGKEIEAARKWI) is the KH domain. The S1 motif domain maps to 623 to 691 (GQIYEGTVVK…ERGKVRLSMK (69 aa)).

Belongs to the polyribonucleotide nucleotidyltransferase family. Mg(2+) is required as a cofactor.

It localises to the cytoplasm. It carries out the reaction RNA(n+1) + phosphate = RNA(n) + a ribonucleoside 5'-diphosphate. Involved in mRNA degradation. Catalyzes the phosphorolysis of single-stranded polyribonucleotides processively in the 3'- to 5'-direction. This is Polyribonucleotide nucleotidyltransferase from Rhizobium etli (strain CIAT 652).